The primary structure comprises 128 residues: Protein BEX2 (128 aa).

R50 bears the Omega-N-methylarginine mark. The disordered stretch occupies residues 107-128; the sequence is SLRAVSTDPPHHDHHDEFCLMP. Basic and acidic residues predominate over residues 115-128; sequence PPHHDHHDEFCLMP. A his cluster region spans residues 117 to 121; that stretch reads HHDHH. C125 contacts Zn(2+).

This sequence belongs to the BEX family. In terms of assembly, interacts with LMO2, possibly leading to regulate the transcriptional activity of a DNA-binding complex containing LMO2. Interacts with OMP. As to expression, expressed in central nervous system, with high level in pituitary, cerebellum and temporal lobe. Widely expressed in breast cancer cell lines.

Its subcellular location is the cytoplasm. It localises to the nucleus. Functionally, regulator of mitochondrial apoptosis and G1 cell cycle in breast cancer. Protects the breast cancer cells against mitochondrial apoptosis and this effect is mediated through the modulation of BCL2 protein family, which involves the positive regulation of anti-apoptotic member BCL2 and the negative regulation of pro-apoptotic members BAD, BAK1 and PUMA. Required for the normal cell cycle progression during G1 in breast cancer cells through the regulation of CCND1 and CDKN1A. Regulates the level of PP2A regulatory subunit B and PP2A phosphatase activity. In absence of reductive stress, acts as a pseudosubstrate for the CRL2(FEM1B) complex: associates with FEM1B via zinc, thereby preventing association between FEM1B and its substrates. The protein is Protein BEX2 (BEX2) of Homo sapiens (Human).